The following is a 67-amino-acid chain: Large ribosomal subunit protein bL35 (67 aa).

A compositionally biased stretch (basic residues) spans methionine 1 to valine 16. Positions methionine 1–valine 22 are disordered.

Belongs to the bacterial ribosomal protein bL35 family.

The chain is Large ribosomal subunit protein bL35 from Methylibium petroleiphilum (strain ATCC BAA-1232 / LMG 22953 / PM1).